Reading from the N-terminus, the 268-residue chain is TATA-box-binding protein (268 aa).

Polar residues predominate over residues 1–24; that stretch reads MDSLTTHPATAQQARAFTSPSSLS. The segment at 1-86 is disordered; sequence MDSLTTHPAT…TPAATPGASA (86 aa). A compositionally biased stretch (low complexity) spans 50–86; it reads NGQSANGNVNGQQQGANAANGNGVMPATPAATPGASA. A run of 2 repeats spans residues 95–171 and 185–262.

This sequence belongs to the TBP family. In terms of assembly, belongs to the TFIID complex together with the TBP-associated factors (TAFs). Binds DNA as monomer.

It is found in the nucleus. In terms of biological role, general transcription factor that functions at the core of the DNA-binding multiprotein factor TFIID. Binding of TFIID to the TATA box is the initial transcriptional step of the pre-initiation complex (PIC), playing a role in the activation of eukaryotic genes transcribed by RNA polymerase II. In Emericella nidulans (strain FGSC A4 / ATCC 38163 / CBS 112.46 / NRRL 194 / M139) (Aspergillus nidulans), this protein is TATA-box-binding protein (tbpA).